A 946-amino-acid chain; its full sequence is Leucine--tRNA ligase (946 aa).

The 'HIGH' region signature appears at 40-51; it reads PYPSGAGLHVGH. The 'KMSKS' region motif lies at 719-723; sequence KMSKS. An ATP-binding site is contributed by Lys-722.

Belongs to the class-I aminoacyl-tRNA synthetase family.

The protein localises to the cytoplasm. It catalyses the reaction tRNA(Leu) + L-leucine + ATP = L-leucyl-tRNA(Leu) + AMP + diphosphate. This is Leucine--tRNA ligase from Parabacteroides distasonis (strain ATCC 8503 / DSM 20701 / CIP 104284 / JCM 5825 / NCTC 11152).